Consider the following 729-residue polypeptide: Fatty acid oxidation complex subunit alpha (729 aa).

Positions 1–189 (MLYKGDTLYL…KIGLVDGVVK (189 aa)) are enoyl-CoA hydratase/isomerase. Asp-296 is a substrate binding site. A 3-hydroxyacyl-CoA dehydrogenase region spans residues 311-729 (ETPKQAAVLG…ARPVGDLKTA (419 aa)). NAD(+) contacts are provided by residues Met-324, Asp-343, 400–402 (VVE), Lys-407, and Ser-429. His-450 serves as the catalytic For 3-hydroxyacyl-CoA dehydrogenase activity. Asn-453 serves as a coordination point for NAD(+). Substrate-binding residues include Asn-500 and Tyr-660. Residues 707 to 729 (ARHNEPYYPPVEPARPVGDLKTA) are disordered.

The protein in the N-terminal section; belongs to the enoyl-CoA hydratase/isomerase family. In the C-terminal section; belongs to the 3-hydroxyacyl-CoA dehydrogenase family. In terms of assembly, heterotetramer of two alpha chains (FadB) and two beta chains (FadA).

It carries out the reaction a (3S)-3-hydroxyacyl-CoA + NAD(+) = a 3-oxoacyl-CoA + NADH + H(+). It catalyses the reaction a (3S)-3-hydroxyacyl-CoA = a (2E)-enoyl-CoA + H2O. The catalysed reaction is a 4-saturated-(3S)-3-hydroxyacyl-CoA = a (3E)-enoyl-CoA + H2O. The enzyme catalyses (3S)-3-hydroxybutanoyl-CoA = (3R)-3-hydroxybutanoyl-CoA. It carries out the reaction a (3Z)-enoyl-CoA = a 4-saturated (2E)-enoyl-CoA. It catalyses the reaction a (3E)-enoyl-CoA = a 4-saturated (2E)-enoyl-CoA. It participates in lipid metabolism; fatty acid beta-oxidation. Involved in the aerobic and anaerobic degradation of long-chain fatty acids via beta-oxidation cycle. Catalyzes the formation of 3-oxoacyl-CoA from enoyl-CoA via L-3-hydroxyacyl-CoA. It can also use D-3-hydroxyacyl-CoA and cis-3-enoyl-CoA as substrate. The chain is Fatty acid oxidation complex subunit alpha from Escherichia coli O6:K15:H31 (strain 536 / UPEC).